The sequence spans 206 residues: N-(5'-phosphoribosyl)anthranilate isomerase (206 aa).

Belongs to the TrpF family.

It catalyses the reaction N-(5-phospho-beta-D-ribosyl)anthranilate = 1-(2-carboxyphenylamino)-1-deoxy-D-ribulose 5-phosphate. Its pathway is amino-acid biosynthesis; L-tryptophan biosynthesis; L-tryptophan from chorismate: step 3/5. The chain is N-(5'-phosphoribosyl)anthranilate isomerase from Chlamydia felis (strain Fe/C-56) (Chlamydophila felis).